The sequence spans 531 residues: Non-muscle caldesmon (531 aa).

Positions 20 to 200 are myosin and calmodulin-binding; that stretch reads AYQRNDDDEE…LKGGNLGENQ (181 aa). The disordered stretch occupies residues 21–379; sequence YQRNDDDEEE…KKPFKCFTPK (359 aa). Positions 41 to 50 are enriched in basic and acidic residues; sequence QERLRQKQEE. Positions 54 to 68 are enriched in polar residues; sequence GQVTDQVEAHVQNSA. Positions 93 to 116 are enriched in basic and acidic residues; that stretch reads RLARREERRQKRLQEALERQKEFD. Residues 120–133 are compositionally biased toward polar residues; it reads TDGSLSVPSRRMQN. Serine 123 is subject to Phosphoserine. Basic and acidic residues predominate over residues 143 to 156; the sequence is GEEKGESRSGRYEM. Positions 162-172 are enriched in polar residues; that stretch reads VITSYQKNSYQ. Basic and acidic residues predominate over residues 200 to 227; sequence QIKDEKIKKDKEPKEEVKNFLDRKKGFT. Serine 249 carries the phosphoserine; by CDK1 modification. Composition is skewed to basic and acidic residues over residues 271 to 297 and 305 to 372; these read AGKR…KQKQ and EELK…DKKP. The tropomyosin-binding stretch occupies residues 303–360; sequence ELEELKKKREERRKVLEEEEQRRKQEEADRKAREEEEKRRLKEEIERRRAEAAEKRQK. Serine 382 bears the Phosphoserine mark. A Glycyl lysine isopeptide (Lys-Gly) (interchain with G-Cter in SUMO2) cross-link involves residue lysine 384. Residues 392–424 form a strong actin-binding region; sequence LNKSVQKSGVKSTHQAAVVSKIDSRLEQYTNAI. Serine 395 bears the Phosphoserine mark. The tropomyosin-binding stretch occupies residues 402-412; sequence KSTHQAAVVSK. The segment at 454-460 is calmodulin-binding; that stretch reads WEKGSVF. The disordered stretch occupies residues 458 to 531; it reads SVFSSPSASG…VDKVTSPTKV (74 aa). The segment covering 459 to 471 has biased composition (polar residues); it reads VFSSPSASGTPNK. Serine 462 carries the phosphoserine; by CDK1 modification. Phosphothreonine; by CDK1 is present on threonine 468. 2 positions are modified to phosphoserine; by CDK1: serine 491 and serine 497. Over residues 503–522 the composition is skewed to basic and acidic residues; it reads SDLRPGDVSGKRNLWEKQSV. Positions 506–531 are weak actin-binding; sequence RPGDVSGKRNLWEKQSVDKVTSPTKV. Serine 527 carries the post-translational modification Phosphoserine; by CDK1.

It belongs to the caldesmon family. Post-translationally, in non-muscle cells, phosphorylation by CDK1 during mitosis causes caldesmon to dissociate from microfilaments. Phosphorylation reduces caldesmon binding to actin, myosin, and calmodulin as well as its inhibition of actomyosin ATPase activity. Phosphorylation also occurs in both quiescent and dividing smooth muscle cells with similar effects on the interaction with actin and calmodulin and on microfilaments reorganization. CDK1-mediated phosphorylation promotes Schwann cell migration during peripheral nerve regeneration. High-molecular-weight caldesmon (h-caldesmon) is predominantly expressed in smooth muscles, whereas low-molecular-weight caldesmon (l-caldesmon) is widely distributed in non-muscle tissues and cells. Not expressed in skeletal muscle or heart.

It localises to the cytoplasm. It is found in the cytoskeleton. The protein localises to the myofibril. The protein resides in the stress fiber. Functionally, actin- and myosin-binding protein implicated in the regulation of actomyosin interactions in smooth muscle and nonmuscle cells (could act as a bridge between myosin and actin filaments). Stimulates actin binding of tropomyosin which increases the stabilization of actin filament structure. In muscle tissues, inhibits the actomyosin ATPase by binding to F-actin. This inhibition is attenuated by calcium-calmodulin and is potentiated by tropomyosin. Interacts with actin, myosin, two molecules of tropomyosin and with calmodulin. Also plays an essential role during cellular mitosis and receptor capping. Involved in Schwann cell migration during peripheral nerve regeneration. This is Non-muscle caldesmon (Cald1) from Rattus norvegicus (Rat).